A 529-amino-acid chain; its full sequence is Glucose transporter 2A (529 aa).

The tract at residues 1–22 (MTERRDNVSHAPDAIEGPNDGA) is disordered. The Cytoplasmic portion of the chain corresponds to 1–43 (MTERRDNVSHAPDAIEGPNDGAHAEDTSPGFFSFENLGVAQVQ). The chain crosses the membrane as a helical span at residues 44 to 64 (VVGGTLNGFSIGFVAVYILLY). The Extracellular segment spans residues 65 to 119 (EVATNCSLFKTTEACKAVGSYGCEWKDTEVCSWKKECDSDSDGVNPCESLIGYSS). Residues 120–140 (LYSGIFASAMIVGSMVGSIIA) traverse the membrane as a helical segment. The Cytoplasmic segment spans residues 141-152 (GKCITMFGLKKS). The chain crosses the membrane as a helical span at residues 153–173 (FIIVGVMSVVASALNHISVAT). At 174 to 175 (NE) the chain is on the extracellular side. The chain crosses the membrane as a helical span at residues 176–196 (FWVLCAGRVLMGIGLGVVCVI). Over 197–214 (CPMYVNENAHPKLSKVDG) the chain is Cytoplasmic. The helical transmembrane segment at 215–235 (VLFQVFITFGIMLAAMLGLIL) threads the bilayer. Topologically, residues 236–250 (DKTVNYDNDPDMAGR) are extracellular. A helical transmembrane segment spans residues 251-271 (FHGFCAVSSVLSVAMFLVGMF). The Cytoplasmic portion of the chain corresponds to 272 to 300 (LRESTATFSQDDDGKADGGMDPNEYGWGQ). A helical transmembrane segment spans residues 301–321 (MLWPLFMGAVTAGTLQLTGIN). Over 322-339 (AVMNYAPKITENLGMDPS) the chain is Extracellular. The chain crosses the membrane as a helical span at residues 340 to 360 (LGNFLVMAWNFVTSLVAIPLA). Over 361-368 (SRFTMRQM) the chain is Cytoplasmic. A helical membrane pass occupies residues 369 to 389 (FITCSFVASCMCLFLCGIPVF). Residues 390-404 (PGVAEEKVKNGVATT) are Extracellular-facing. Residues 405–425 (GIALFIAAFEFGVGSCFFVLA) form a helical membrane-spanning segment. At 426–439 (QDLFPPSFRPKGSS) the chain is on the cytoplasmic side. Residues 440–460 (FVVMMQFIFNILINLLYPITT) traverse the membrane as a helical segment. Over 461 to 476 (EAISGGATGDQDKGQA) the chain is Extracellular. The chain crosses the membrane as a helical span at residues 477–497 (VVFILFGLIGLICFVLQFFYL). Residues 498 to 529 (YPYDANQDHENDHGTEPVERILSPVDVPTPRN) lie on the Cytoplasmic side of the membrane. Positions 508–529 (NDHGTEPVERILSPVDVPTPRN) are disordered.

The protein belongs to the major facilitator superfamily. Sugar transporter (TC 2.A.1.1) family.

The protein resides in the membrane. In terms of biological role, facilitative glucose transporter. In Trypanosoma brucei brucei, this protein is Glucose transporter 2A (THT2A).